We begin with the raw amino-acid sequence, 548 residues long: 5-epi-aristolochene synthase 2 (548 aa).

5 residues coordinate Mg(2+): D301, D305, D444, T448, and E452. A DDXXD motif motif is present at residues D301–D305.

Belongs to the terpene synthase family. As to quaternary structure, monomer. The cofactor is Mg(2+). Expressed in roots, but not in shoots.

It is found in the cytoplasm. The catalysed reaction is (2E,6E)-farnesyl diphosphate = (+)-5-epi-aristolochene + diphosphate. Its pathway is secondary metabolite biosynthesis; terpenoid biosynthesis. Its function is as follows. Catalyzes the cyclization of trans,trans-farnesyl diphosphate (FPP) to the bicyclic intermediate 5-epi-aristolochene, initial step in the conversion of FPP to the sesquiterpenoid antifungal phytoalexin capsidiol. Produces germacrene A as an enzyme-bound intermediate that is not released by the enzyme, but is further cyclized to produce the bicyclic 5-epi-aristolochene. This is 5-epi-aristolochene synthase 2 from Nicotiana attenuata (Coyote tobacco).